A 197-amino-acid polypeptide reads, in one-letter code: Nascent polypeptide-associated complex subunit alpha (197 aa).

Residues 1–20 (MAEPVEDSVDEISSEGDSDV) show a composition bias toward acidic residues. 2 disordered regions span residues 1-46 (MAEP…RKLL) and 120-154 (GADR…SKAD). Positions 36–101 (DKNERKSRKL…AKVEDMSQNS (66 aa)) constitute an NAC-A/B domain. The span at 134–154 (SGHDHAHDHDHSHGDCASKAD) shows a compositional bias: basic and acidic residues. A UBA domain is found at 158–195 (VNQSDIDLVVSQVGCTREQAVEALIKNKGDIVETIMQL).

This sequence belongs to the NAC-alpha family.

Its function is as follows. May promote appropriate targeting of ribosome-nascent polypeptide complexes. The protein is Nascent polypeptide-associated complex subunit alpha of Babesia divergens.